The chain runs to 508 residues: Photosystem II CP47 reaction center protein (508 aa).

The next 6 membrane-spanning stretches (helical) occupy residues 21-36, 101-115, 140-156, 203-218, 237-252, and 457-472; these read SVHIMHTALVAGWAGS, IVFSGLCFLAAIWHW, GIHLFLSGVACFGFGAF, IAAGTLGILAGLFHLS, VLSSSIAAVFFAAFVV, and SFALLFFFGHIWHGAR.

This sequence belongs to the PsbB/PsbC family. PsbB subfamily. PSII is composed of 1 copy each of membrane proteins PsbA, PsbB, PsbC, PsbD, PsbE, PsbF, PsbH, PsbI, PsbJ, PsbK, PsbL, PsbM, PsbT, PsbX, PsbY, PsbZ, Psb30/Ycf12, at least 3 peripheral proteins of the oxygen-evolving complex and a large number of cofactors. It forms dimeric complexes. It depends on Binds multiple chlorophylls. PSII binds additional chlorophylls, carotenoids and specific lipids. as a cofactor.

Its subcellular location is the plastid. The protein localises to the chloroplast thylakoid membrane. Functionally, one of the components of the core complex of photosystem II (PSII). It binds chlorophyll and helps catalyze the primary light-induced photochemical processes of PSII. PSII is a light-driven water:plastoquinone oxidoreductase, using light energy to abstract electrons from H(2)O, generating O(2) and a proton gradient subsequently used for ATP formation. The polypeptide is Photosystem II CP47 reaction center protein (Olimarabidopsis pumila (Dwarf rocket)).